The chain runs to 197 residues: UPF0251 protein CT1277 (197 aa).

The disordered stretch occupies residues 138-197 (GGGFGGGRRGGGKCRGFRSGLDRGPGHGEGRCQGEGHGNGNGNGNGQGRMRRNQQEGGEV). Positions 157–171 (GLDRGPGHGEGRCQG) are enriched in basic and acidic residues. The span at 172 to 184 (EGHGNGNGNGNGQ) shows a compositional bias: gly residues.

It belongs to the UPF0251 family.

The polypeptide is UPF0251 protein CT1277 (Chlorobaculum tepidum (strain ATCC 49652 / DSM 12025 / NBRC 103806 / TLS) (Chlorobium tepidum)).